Consider the following 68-residue polypeptide: Venom peptide 3 (68 aa).

Positions Met-1–Ala-25 are cleaved as a signal peptide. 5 AXPX repeats span residues Ala-25–Ala-28, Ala-33–Ile-36, Ala-37–Tyr-40, Ala-41–Glu-44, and Ala-47–Glu-50. Residues Glu-26–Ala-51 constitute a propeptide that is removed on maturation. The residue at position 65 (Leu-65) is a Leucine amide.

In terms of tissue distribution, expressed by the venom gland.

It localises to the secreted. Its subcellular location is the target cell membrane. Antimicrobial peptide with strong activity against the fungi B.cinerea (MIC=5 uM) and C.albicans (MIC=33 uM), and no activity against the Gram-negative bacterium E.coli (MIC&gt;200 uM) and the Gram-positive bacterium S.aureus (MIC&gt;200 uM). Shows cytolytic activity against insect cell lines. Has no hemolytic activity against human erythrocytes. In vivo, peptide injection in the vicinity of the head and thorax of lepidopteran larvae induces feeding disorder that lasts one or two days before recovering. This Orancistrocerus drewseni (Solitary wasp) protein is Venom peptide 3.